A 393-amino-acid chain; its full sequence is Beta-ureidopropionase (393 aa).

Positions 72–344 (VRVGLVQNRI…DGLLVTELNL (273 aa)) constitute a CN hydrolase domain. Glu-119 serves as the catalytic Proton acceptor. Lys-196 functions as the Proton donor in the catalytic mechanism. Cys-233 functions as the Nucleophile in the catalytic mechanism. A Phosphoserine modification is found at Ser-378.

Belongs to the carbon-nitrogen hydrolase superfamily. BUP family. Homodimer, homotetramer, homooctamer; can also form higher homooligomers.

Its subcellular location is the cytoplasm. It catalyses the reaction 3-(carbamoylamino)propanoate + H2O + 2 H(+) = beta-alanine + NH4(+) + CO2. The catalysed reaction is 3-(carbamoylamino)-2-methylpropanoate + H2O + 2 H(+) = (R)-3-amino-2-methylpropanoate + NH4(+) + CO2. Its pathway is amino-acid biosynthesis; beta-alanine biosynthesis. In terms of biological role, catalyzes a late step in pyrimidine degradation. Converts N-carbamoyl-beta-alanine (3-ureidopropanoate) into beta-alanine, ammonia and carbon dioxide. Likewise, converts N-carbamoyl-beta-aminoisobutyrate (3-ureidoisobutyrate) into beta-aminoisobutyrate, ammonia and carbon dioxide. The polypeptide is Beta-ureidopropionase (Upb1) (Mus musculus (Mouse)).